A 250-amino-acid chain; its full sequence is Putative (5-formylfuran-3-yl)methyl phosphate synthase (250 aa).

K29 (schiff-base intermediate with substrate) is an active-site residue. K87 (proton acceptor) is an active-site residue.

Belongs to the MfnB family.

It carries out the reaction 2 D-glyceraldehyde 3-phosphate = 4-(hydroxymethyl)-2-furancarboxaldehyde phosphate + phosphate + 2 H2O. Functionally, catalyzes the formation of 4-(hydroxymethyl)-2-furancarboxaldehyde phosphate (4-HFC-P) from two molecules of glyceraldehyde-3-P (GA-3-P). This is Putative (5-formylfuran-3-yl)methyl phosphate synthase from Streptomyces griseus subsp. griseus (strain JCM 4626 / CBS 651.72 / NBRC 13350 / KCC S-0626 / ISP 5235).